A 349-amino-acid polypeptide reads, in one-letter code: Protein RecA (349 aa).

An ATP-binding site is contributed by 64-71 (GPESSGKT). The disordered stretch occupies residues 328–349 (NGEIEVEAPSEEEFEDLPLDLK). Over residues 331–349 (IEVEAPSEEEFEDLPLDLK) the composition is skewed to acidic residues.

Belongs to the RecA family.

Its subcellular location is the cytoplasm. Can catalyze the hydrolysis of ATP in the presence of single-stranded DNA, the ATP-dependent uptake of single-stranded DNA by duplex DNA, and the ATP-dependent hybridization of homologous single-stranded DNAs. It interacts with LexA causing its activation and leading to its autocatalytic cleavage. This is Protein RecA from Halalkalibacterium halodurans (strain ATCC BAA-125 / DSM 18197 / FERM 7344 / JCM 9153 / C-125) (Bacillus halodurans).